We begin with the raw amino-acid sequence, 329 residues long: Ornithine carbamoyltransferase (329 aa).

Residues 51 to 54, Q78, R102, and 129 to 132 contribute to the carbamoyl phosphate site; these read STRT and HPVQ. Residues N174, D238, and 242–243 each bind L-ornithine; that span reads SM. Carbamoyl phosphate contacts are provided by residues 278 to 279 and R306; that span reads CL.

The protein belongs to the aspartate/ornithine carbamoyltransferase superfamily. OTCase family.

Its subcellular location is the cytoplasm. It carries out the reaction carbamoyl phosphate + L-ornithine = L-citrulline + phosphate + H(+). Its pathway is amino-acid biosynthesis; L-arginine biosynthesis; L-arginine from L-ornithine and carbamoyl phosphate: step 1/3. Reversibly catalyzes the transfer of the carbamoyl group from carbamoyl phosphate (CP) to the N(epsilon) atom of ornithine (ORN) to produce L-citrulline. This Helicobacter hepaticus (strain ATCC 51449 / 3B1) protein is Ornithine carbamoyltransferase.